The chain runs to 98 residues: Large ribosomal subunit protein mL53 (98 aa).

Belongs to the mitochondrion-specific ribosomal protein mL53 family. As to quaternary structure, component of the mitochondrial large ribosomal subunit (mt-LSU). Mature yeast 74S mitochondrial ribosomes consist of a small (37S) and a large (54S) subunit. The 37S small subunit contains a 15S ribosomal RNA (15S mt-rRNA) and 34 different proteins. The 54S large subunit contains a 21S rRNA (21S mt-rRNA) and 46 different proteins.

Its subcellular location is the mitochondrion. Functionally, component of the mitochondrial ribosome (mitoribosome), a dedicated translation machinery responsible for the synthesis of mitochondrial genome-encoded proteins, including at least some of the essential transmembrane subunits of the mitochondrial respiratory chain. The mitoribosomes are attached to the mitochondrial inner membrane and translation products are cotranslationally integrated into the membrane. This is Large ribosomal subunit protein mL53 (MRPL44) from Saccharomyces cerevisiae (strain ATCC 204508 / S288c) (Baker's yeast).